Reading from the N-terminus, the 174-residue chain is MAKDPTFEEVTGCQRALFEWADSYDTKDWERLKKCVAPTLRIDYRSFLDKLWEAMPSDEFILMASDPRFLGNPLLKTQHFVGLSTWQKISPDEIEGTHQLRVPHQRYTDSNMKEVAVKGHAHGIATMWYKRVEDEWKFAGVCPQIRWAEFDYDKVFAEGKDHFGENGGNGEHAV.

Substrate-binding residues include Tyr24, Tyr44, and Phe47. Active-site residues include His79 and His104.

It belongs to the scytalone dehydratase family. In terms of assembly, homotrimer. Each subunit contains an active site, located in the central part of the hydrophobic core of the monomer, which functions independently.

The protein operates within secondary metabolite biosynthesis. In terms of biological role, dehydratase; part of the gene cluster that mediates the biosynthesis of agnestins, dihydroxy-xanthone metabolites. The pathway begins with the assembly and cyclization of atrochrysone thioester by the non-reducing polyketide synthase Agnpks1. The atrochrysone carboxyl ACP thioesterase AgnL7 then breaks the thioester bond and releases the atrochrysone carboxylic acid as the first enzyme-free intermediate. The decarboxylase AgnL1 then catalyzes the concerted decarboxylation-elimination required to convert atochrysone carboxylic acid into emodin anthrone, which is further oxidized to emodin by the anthrone oxygenase AgnL2. Emodin then undergoes reduction catalyzed by the oxidoreductase AgnL4 to yield the dihydroquinone tautomer which is the substrate for reduction by the short chain dehydrogenase AgnL6 reduction to produce hydroxyketone, followed by AgnL8 dehydration and likely spontaneous autoxidation to chrysophanol. Baeyer-Villiger oxidation by the oxidase AgnL3 leads to monodictyphenone via cleavage of the C-10/C-10a bond of chrysophanol. Alternative cleavage at the C-4a/C-10 bond of chrysophanol also leads to the formation some cephalone F. Further conversion to agnestins A and B, requires reduction to dihydro-monodictyphenone, oxidation to agnestin C probably via an epoxide, and rearrangement to either agnestin A or agnestin B directly, although agnestin A or agnestin B can also interconvert. Within the cluster, AgnR1 is the only unassigned oxidoreductase present which could be involved in this conversion. However, AgnR1 seems not to be involved in this step, and thus genes involved in the proposed oxidation/reduction may be located elsewhere on the genome. Further agnestin A derivatives are probably formed by spontaneous decarboxylations, dehydrations and methanolysis reactions. The protein is Dehydratase AgnL8 of Paecilomyces divaricatus (Penicillium divaricatum).